The chain runs to 130 residues: Large ribosomal subunit protein bL19c (130 aa).

The protein belongs to the bacterial ribosomal protein bL19 family.

It is found in the plastid. Its subcellular location is the chloroplast. The protein is Large ribosomal subunit protein bL19c (rpl19) of Chlorella vulgaris (Green alga).